A 294-amino-acid chain; its full sequence is Putative deoxyribonuclease TATDN3 (294 aa).

Residues His-9, His-11, Glu-104, His-144, His-167, and Asp-215 each coordinate Zn(2+).

It belongs to the metallo-dependent hydrolases superfamily. TatD-type hydrolase family. Mn(2+) serves as cofactor. Ca(2+) is required as a cofactor. The cofactor is Mg(2+). Requires Zn(2+) as cofactor.

It is found in the nucleus. With respect to regulation, the 3'-exonuclease activity is sensitive to the metal ion present in the active site, whereas the AP endodeoxyribonuclease activity is observed in a variety of divalent metal cofactors. 3'-exoxonuclease activity is suppressed in the presence of Ca(2+), Zn(2+) and Ni(2+). In terms of biological role, exhibits 3'-exonuclease activities and apurinic/apyrimidinic (AP) endonuclease (in vitro). Show preferential AP endonuclease activity on double-stranded DNA substrates and 3'- exonuclease activity on single-stranded DNA. The chain is Putative deoxyribonuclease TATDN3 (Tatdn3) from Mus musculus (Mouse).